Here is a 114-residue protein sequence, read N- to C-terminus: MTCKMSQLERNIETIINTFHQYSVKLGHPDTLNQGEFKELVRKDLQNFLKKENKNEKVIEHIMEDLDTNADKQLSFEEFIMLMARLTWASHEKMHEGDEGPGHHHKPGLGEGTP.

T2 carries the blocked amino end (Thr) modification. The residue at position 3 (C3) is an S-nitrosocysteine; transient. 2 consecutive EF-hand domains span residues I12–N47 and K54–A89. H20 serves as a coordination point for Zn(2+). Positions 23, 26, and 28 each coordinate Ca(2+). Position 30 (D30) interacts with Zn(2+). Ca(2+) contacts are provided by T31, E36, D67, N69, D71, Q73, and E78. The Zn(2+) site is built by H91 and H95. Basic and acidic residues predominate over residues K93 to G102. The interval K93–P114 is disordered. Position 105 is a pros-methylhistidine (H105). A Phosphothreonine; by MAPK14 modification is found at T113.

Homodimer. Preferentially exists as a heterodimer or heterotetramer with S100A8 known as calprotectin (S100A8/A9). S100A9 interacts with ATP2A2. S100A9 interacts with AGER, and with the heterodimeric complex formed by TLR4 and LY96 in the presence of calcium and/or zinc ions. S100A9 binds quinoline-3-carboxamides in the presence of calcium and/or zinc ions. S100A9 interacts with amyloid-beta protein 40. Calprotectin (S100A8/9) interacts with CEACAM3 and tubulin filaments in a calcium-dependent manner. Heterotetrameric calprotectin (S100A8/A9) interacts with ANXA6 and associates with tubulin filaments in activated monocytes. Calprotectin (S100A8/9) interacts with NCF2/P67PHOX, RAC1, RAC2, CYBA and CYBB. Calprotectin (S100A8/9) interacts with NOS2 to form the iNOS-S100A8/A9 transnitrosylase complex; induced by LDL(ox). Calprotectin (S100A8/9) interacts with CD69. Phosphorylated. Phosphorylation inhibits activation of tubulin polymerization. In terms of processing, S-nitrosylation of Cys-3 is implicated in LDL(ox)-induced S-nitrosylation of GAPDH at 'Cys-247' through a transnitrosylase mechanism involving a iNOS-S100A8/9 complex. Post-translationally, methylation at His-105 by METTL9 reduces zinc-binding without affecting heterodimerization with S100A8. As to expression, calprotectin (S100A8/9) is predominantly expressed in myeloid cells. Except for inflammatory conditions, the expression is restricted to a specific stage of myeloid differentiation since both proteins are expressed in circulating neutrophils and monocytes but are absent in normal tissue macrophages and lymphocytes. Under chronic inflammatory conditions, such as psoriasis and malignant disorders, also expressed in the epidermis. Found in high concentrations at local sites of inflammation or in the serum of patients with inflammatory diseases such as rheumatoid, cystic fibrosis, inflammatory bowel disease, Crohn's disease, giant cell arteritis, cystic fibrosis, Sjogren's syndrome, systemic lupus erythematosus, and progressive systemic sclerosis. Involved in the formation and deposition of amyloids in the aging prostate known as corpora amylacea inclusions. Strongly up-regulated in many tumors, including gastric, esophageal, colon, pancreatic, bladder, ovarian, thyroid, breast and skin cancers.

Its subcellular location is the secreted. It is found in the cytoplasm. The protein resides in the cytoskeleton. It localises to the cell membrane. Its function is as follows. S100A9 is a calcium- and zinc-binding protein which plays a prominent role in the regulation of inflammatory processes and immune response. It can induce neutrophil chemotaxis, adhesion, can increase the bactericidal activity of neutrophils by promoting phagocytosis via activation of SYK, PI3K/AKT, and ERK1/2 and can induce degranulation of neutrophils by a MAPK-dependent mechanism. Predominantly found as calprotectin (S100A8/A9) which has a wide plethora of intra- and extracellular functions. The intracellular functions include: facilitating leukocyte arachidonic acid trafficking and metabolism, modulation of the tubulin-dependent cytoskeleton during migration of phagocytes and activation of the neutrophilic NADPH-oxidase. Also participates in regulatory T-cell differentiation together with CD69. Activates NADPH-oxidase by facilitating the enzyme complex assembly at the cell membrane, transferring arachidonic acid, an essential cofactor, to the enzyme complex and S100A8 contributes to the enzyme assembly by directly binding to NCF2/P67PHOX. The extracellular functions involve pro-inflammatory, antimicrobial, oxidant-scavenging and apoptosis-inducing activities. Its pro-inflammatory activity includes recruitment of leukocytes, promotion of cytokine and chemokine production, and regulation of leukocyte adhesion and migration. Acts as an alarmin or a danger associated molecular pattern (DAMP) molecule and stimulates innate immune cells via binding to pattern recognition receptors such as Toll-like receptor 4 (TLR4) and receptor for advanced glycation endproducts (AGER). Binding to TLR4 and AGER activates the MAP-kinase and NF-kappa-B signaling pathways resulting in the amplification of the pro-inflammatory cascade. Has antimicrobial activity towards bacteria and fungi and exerts its antimicrobial activity probably via chelation of Zn(2+) which is essential for microbial growth. Can induce cell death via autophagy and apoptosis and this occurs through the cross-talk of mitochondria and lysosomes via reactive oxygen species (ROS) and the process involves BNIP3. Can regulate neutrophil number and apoptosis by an anti-apoptotic effect; regulates cell survival via ITGAM/ITGB and TLR4 and a signaling mechanism involving MEK-ERK. Its role as an oxidant scavenger has a protective role in preventing exaggerated tissue damage by scavenging oxidants. Can act as a potent amplifier of inflammation in autoimmunity as well as in cancer development and tumor spread. Has transnitrosylase activity; in oxidatively-modified low-densitity lipoprotein (LDL(ox))-induced S-nitrosylation of GAPDH on 'Cys-247' proposed to transfer the NO moiety from NOS2/iNOS to GAPDH via its own S-nitrosylated Cys-3. The iNOS-S100A8/A9 transnitrosylase complex is proposed to also direct selective inflammatory stimulus-dependent S-nitrosylation of multiple targets such as ANXA5, EZR, MSN and VIM by recognizing a [IL]-x-C-x-x-[DE] motif. This Homo sapiens (Human) protein is Protein S100-A9.